Reading from the N-terminus, the 267-residue chain is GTP cyclohydrolase FolE2 (267 aa).

Belongs to the GTP cyclohydrolase IV family.

It catalyses the reaction GTP + H2O = 7,8-dihydroneopterin 3'-triphosphate + formate + H(+). Its pathway is cofactor biosynthesis; 7,8-dihydroneopterin triphosphate biosynthesis; 7,8-dihydroneopterin triphosphate from GTP: step 1/1. Converts GTP to 7,8-dihydroneopterin triphosphate. In Nitrosomonas eutropha (strain DSM 101675 / C91 / Nm57), this protein is GTP cyclohydrolase FolE2.